Here is a 285-residue protein sequence, read N- to C-terminus: Sulfotransferase 2A2 (285 aa).

3'-phosphoadenylyl sulfate-binding residues include Lys-44, Ser-45, Gly-46, Thr-47, Asn-48, and Trp-49. Residue His-99 is the Proton acceptor of the active site. Residues Arg-121, Ser-129, Tyr-184, Ser-218, Met-223, Arg-247, Lys-248, and Gly-249 each contribute to the 3'-phosphoadenylyl sulfate site.

It belongs to the sulfotransferase 1 family.

The protein localises to the cytoplasm. It carries out the reaction an alcohol + 3'-phosphoadenylyl sulfate = an alkyl sulfate + adenosine 3',5'-bisphosphate + H(+). Functionally, sulfotransferase that utilizes 3'-phospho-5'-adenylyl sulfate (PAPS) as sulfonate donor to catalyze the sulfate conjugation of a potential wide variety of acceptor molecules bearing a hydroxyl group. Sulfonation increases the water solubility of most compounds, and therefore their renal excretion, but it can also result in bioactivation to form active metabolites. In Mus musculus (Mouse), this protein is Sulfotransferase 2A2.